The chain runs to 288 residues: Transmembrane and coiled-coil domain-containing protein 5A (288 aa).

A coiled-coil region spans residues 10 to 192 (KRNIISLNMD…ALFLEREVSK (183 aa)). Residues 224-244 (IFCCLFFITLFFIRLLSYMFF) form a helical membrane-spanning segment.

This sequence belongs to the TMCO5 family.

The protein resides in the endoplasmic reticulum membrane. It localises to the nucleus membrane. The protein is Transmembrane and coiled-coil domain-containing protein 5A (TMCO5A) of Homo sapiens (Human).